A 106-amino-acid chain; its full sequence is ATP-dependent Clp protease adapter protein ClpS (106 aa).

Belongs to the ClpS family. As to quaternary structure, binds to the N-terminal domain of the chaperone ClpA.

In terms of biological role, involved in the modulation of the specificity of the ClpAP-mediated ATP-dependent protein degradation. The protein is ATP-dependent Clp protease adapter protein ClpS of Aliivibrio salmonicida (strain LFI1238) (Vibrio salmonicida (strain LFI1238)).